A 289-amino-acid polypeptide reads, in one-letter code: tRNA acetyltransferase TAN1 (289 aa).

The segment covering 1–10 has biased composition (basic and acidic residues); it reads MGEKRNRNGK. Disordered stretches follow at residues 1–31 and 64–83; these read MGEK…DPGT and DIKE…LSIE. Ser72 carries the phosphoserine modification. The THUMP domain maps to 146-259; it reads ADPKNMVKRT…KSNIGMCVVD (114 aa).

Its subcellular location is the cytoplasm. It is found in the nucleus. Its function is as follows. Probable tRNA acetyltransferase required for the formation of the modified nucleoside N(4)-acetylcytidine in serine and leucine tRNAs. Binds RNA. The chain is tRNA acetyltransferase TAN1 (TAN1) from Saccharomyces cerevisiae (strain ATCC 204508 / S288c) (Baker's yeast).